Reading from the N-terminus, the 213-residue chain is Transcription antitermination protein NusB (213 aa).

Belongs to the NusB family.

In terms of biological role, involved in transcription antitermination. Required for transcription of ribosomal RNA (rRNA) genes. Binds specifically to the boxA antiterminator sequence of the ribosomal RNA (rrn) operons. The polypeptide is Transcription antitermination protein NusB (Picosynechococcus sp. (strain ATCC 27264 / PCC 7002 / PR-6) (Agmenellum quadruplicatum)).